Reading from the N-terminus, the 676-residue chain is DNA ligase (676 aa).

Residues 1–10 (MTQAHHDDAG) are compositionally biased toward basic and acidic residues. Positions 1 to 23 (MTQAHHDDAGARNALQGGLATDP) are disordered. Residues 52 to 56 (DAAFD) and 95 to 96 (SL) each bind NAD(+). The active-site N6-AMP-lysine intermediate is K148. Positions 169, 203, and 330 each coordinate NAD(+). Residues C420, C423, C436, and C441 each contribute to the Zn(2+) site. The region spanning 593–676 (EAEGPLAGLT…DKLIAERRGG (84 aa)) is the BRCT domain.

Belongs to the NAD-dependent DNA ligase family. LigA subfamily. The cofactor is Mg(2+). Mn(2+) serves as cofactor.

It carries out the reaction NAD(+) + (deoxyribonucleotide)n-3'-hydroxyl + 5'-phospho-(deoxyribonucleotide)m = (deoxyribonucleotide)n+m + AMP + beta-nicotinamide D-nucleotide.. Functionally, DNA ligase that catalyzes the formation of phosphodiester linkages between 5'-phosphoryl and 3'-hydroxyl groups in double-stranded DNA using NAD as a coenzyme and as the energy source for the reaction. It is essential for DNA replication and repair of damaged DNA. The polypeptide is DNA ligase (Sorangium cellulosum (strain So ce56) (Polyangium cellulosum (strain So ce56))).